A 353-amino-acid polypeptide reads, in one-letter code: Homeobox protein Mohawk (353 aa).

The segment covering 18–27 (RGTPDRERGS) has biased composition (basic and acidic residues). Residues 18 to 50 (RGTPDRERGSRTFSGFLDNPHTGPEVGIPDGPP) form a disordered region. A DNA-binding region (homeobox; TALE-type) is located at residues 71–132 (VRHKRQALQD…NARRRLKNTV (62 aa)). 2 disordered regions span residues 157–183 (LSVS…EEGY) and 243–302 (MGKT…PSKD).

It belongs to the TALE/IRO homeobox family.

The protein localises to the nucleus. Its function is as follows. May act as a morphogenetic regulator of cell adhesion. Participates in the early events that lead to differentiation. The polypeptide is Homeobox protein Mohawk (Mkx) (Mus musculus (Mouse)).